A 388-amino-acid chain; its full sequence is Gastricsin (388 aa).

Residues 1–16 (MKWMVVVLVCLQLLEA) form the signal peptide. Residues 17–59 (AVVKVPLKKFKSIRETMKEKGLLGEFLRTHKYDPAWKYRFGDL) constitute a propeptide, activation peptide. In terms of domain architecture, Peptidase A1 spans 73–385 (YFGEISIGTP…DLGNNRVGFA (313 aa)). D91 is an active-site residue. Cystine bridges form between C104–C109 and C267–C271. The active site involves D276. A disulfide bridge connects residues C310 and C343.

This sequence belongs to the peptidase A1 family.

It is found in the secreted. The enzyme catalyses More restricted specificity than pepsin A, but shows preferential cleavage at Tyr-|-Xaa bonds. High activity on hemoglobin.. Hydrolyzes a variety of proteins. This chain is Gastricsin (PGC), found in Homo sapiens (Human).